The chain runs to 314 residues: Olfactory receptor 2W3 (314 aa).

Topologically, residues 1 to 25 (MDGTNGSTQTHFILLGFSDRPHLER) are extracellular. Asparagine 5 carries N-linked (GlcNAc...) asparagine glycosylation. A helical membrane pass occupies residues 26–49 (ILFVVILIAYLLTLVGNTTIILVS). The Cytoplasmic portion of the chain corresponds to 50-57 (RLDPHLHT). Residues 58-79 (PMYFFLAHLSFLDLSFTTSSIP) form a helical membrane-spanning segment. Residues 80–100 (QLLYNLNGCDKTISYMGCAIQ) lie on the Extracellular side of the membrane. The helical transmembrane segment at 101 to 120 (LFLFLGLGGVECLLLAVMAY) threads the bilayer. The Cytoplasmic segment spans residues 121–139 (DRCVAICKPLHYMVIMNPR). A helical membrane pass occupies residues 140 to 158 (LCRGLVSVTWGCGVANSLA). The Extracellular portion of the chain corresponds to 159–195 (MSPVTLRLPRCGHHEVDHFLREMPALIRMACVSTVAI). Residues 196–219 (EGTVFVLAVGVVLSPLVFILLSYS) form a helical membrane-spanning segment. Residues 220-236 (YIVRAVLQIRSASGRQK) lie on the Cytoplasmic side of the membrane. Residues 237-259 (AFGTCGSHLTVVSLFYGNIIYMY) form a helical membrane-spanning segment. The Extracellular portion of the chain corresponds to 260-272 (MQPGASSSQDQGM). A helical membrane pass occupies residues 273–292 (FLMLFYNIVTPLLNPLIYTL). Residues 293–314 (RNREVKGALGRLLLGKRELGKE) are Cytoplasmic-facing.

This sequence belongs to the G-protein coupled receptor 1 family.

It is found in the cell membrane. In terms of biological role, odorant receptor. This chain is Olfactory receptor 2W3 (OR2W3), found in Homo sapiens (Human).